We begin with the raw amino-acid sequence, 337 residues long: GTPase Obg (337 aa).

The Obg domain maps to 1–159; it reads MKFVDSATIS…FELEMELKLM (159 aa). In terms of domain architecture, OBG-type G spans 160 to 322; it reads ADVGLVGFPN…LKDELWRQVS (163 aa). GTP-binding positions include 166 to 173, 191 to 195, 213 to 216, 280 to 283, and 303 to 305; these read GFPNAGKS, FTTLV, DIPG, TKMD, and SSV. Mg(2+) contacts are provided by S173 and T193.

Belongs to the TRAFAC class OBG-HflX-like GTPase superfamily. OBG GTPase family. As to quaternary structure, monomer. Mg(2+) serves as cofactor.

The protein localises to the cytoplasm. An essential GTPase which binds GTP, GDP and possibly (p)ppGpp with moderate affinity, with high nucleotide exchange rates and a fairly low GTP hydrolysis rate. Plays a role in control of the cell cycle, stress response, ribosome biogenesis and in those bacteria that undergo differentiation, in morphogenesis control. The chain is GTPase Obg from Chlorobium phaeobacteroides (strain DSM 266 / SMG 266 / 2430).